The sequence spans 139 residues: Large ribosomal subunit protein bL17 (139 aa).

This sequence belongs to the bacterial ribosomal protein bL17 family. Part of the 50S ribosomal subunit. Contacts protein L32.

In Afipia carboxidovorans (strain ATCC 49405 / DSM 1227 / KCTC 32145 / OM5) (Oligotropha carboxidovorans), this protein is Large ribosomal subunit protein bL17.